The chain runs to 340 residues: Glycerol-3-phosphate dehydrogenase [NAD(P)+] (340 aa).

NADPH contacts are provided by Ser-11, Trp-12, Arg-33, and Lys-106. Positions 106, 137, and 139 each coordinate sn-glycerol 3-phosphate. Ala-141 contacts NADPH. Residues Lys-192, Asp-245, Ser-255, Arg-256, and Asn-257 each coordinate sn-glycerol 3-phosphate. Residue Lys-192 is the Proton acceptor of the active site. Residue Arg-256 participates in NADPH binding. The NADPH site is built by Val-280 and Glu-282.

This sequence belongs to the NAD-dependent glycerol-3-phosphate dehydrogenase family.

It is found in the cytoplasm. It catalyses the reaction sn-glycerol 3-phosphate + NAD(+) = dihydroxyacetone phosphate + NADH + H(+). It carries out the reaction sn-glycerol 3-phosphate + NADP(+) = dihydroxyacetone phosphate + NADPH + H(+). It participates in membrane lipid metabolism; glycerophospholipid metabolism. In terms of biological role, catalyzes the reduction of the glycolytic intermediate dihydroxyacetone phosphate (DHAP) to sn-glycerol 3-phosphate (G3P), the key precursor for phospholipid synthesis. In Bacillus cereus (strain 03BB102), this protein is Glycerol-3-phosphate dehydrogenase [NAD(P)+].